A 258-amino-acid polypeptide reads, in one-letter code: Mediator of RNA polymerase II transcription subunit 7 (258 aa).

Disordered regions lie at residues 1–39 (MLPGFGATQTVSPFPNPPEYASAYTSDRIDNGSAPPPPH) and 202–243 (EKET…PPSV). Over residues 203–217 (KETEEDEEMKEDDEE) the composition is skewed to acidic residues. Positions 220-229 (STSSSEGNQK) are enriched in polar residues.

This sequence belongs to the Mediator complex subunit 7 family. As to quaternary structure, component of the Mediator complex.

The protein localises to the nucleus. Its function is as follows. Component of the Mediator complex, a coactivator involved in the regulated transcription of nearly all RNA polymerase II-dependent genes. Mediator functions as a bridge to convey information from gene-specific regulatory proteins to the basal RNA polymerase II transcription machinery. Mediator is recruited to promoters by direct interactions with regulatory proteins and serves as a scaffold for the assembly of a functional preinitiation complex with RNA polymerase II and the general transcription factors. In Caenorhabditis briggsae, this protein is Mediator of RNA polymerase II transcription subunit 7 (let-49).